A 211-amino-acid chain; its full sequence is Ferritin heavy chain (211 aa).

The N-terminal stretch at 1 to 20 (MKAVLFAVAALLAVCIPISA) is a signal peptide. Positions 35 to 191 (ITMQQSCRGS…GKASTLKKML (157 aa)) constitute a Ferritin-like diiron domain. Cys-41 and Cys-150 form a disulfide bridge. Fe cation contacts are provided by Glu-52, Glu-87, His-90, Glu-136, and Gln-173.

Belongs to the ferritin family. In terms of assembly, oligomer of 12 light (L) chains and 12 heavy (H) chains; L and H chains are disulfide-linked. The functional molecule forms a roughly spherical shell with a diameter of 12 nm and contains a central cavity into which the insoluble ferric iron core is deposited.

Its subcellular location is the golgi apparatus. It localises to the secreted. It carries out the reaction 4 Fe(2+) + O2 + 4 H(+) = 4 Fe(3+) + 2 H2O. In terms of biological role, stores iron in a soluble, non-toxic, readily available form. Important for iron homeostasis. Iron is taken up in the ferrous form and deposited as ferric hydroxides after oxidation. Ferritin is composed of a heavy (H) chain which is responsible for the oxidation and uptake of ferrous iron, and a light (L) chain which facilitates the nucleation of the ferrihydrite iron core. The protein is Ferritin heavy chain of Papilio xuthus (Asian swallowtail butterfly).